A 957-amino-acid chain; its full sequence is MTQTLSQLENSGAFIERHIGPDAGQQQEMLNAVSAESLNALIGQIVPKDIQLANPPQVGEAATEYAALAELKAIVGRNKRFTSYIGMGYTAVQLPPVILRNMLENPGWYTAYTPYQPEVSQGRLEALLNFQQVTLDLTGLDMASASLLDEATAAAEAMAMAKRVSKLKNANRFFVASDVHPQTLDVVRTRAKTFGFDVIVDDAAKALDHQNVFGVLLQQVGSTGEIHDYSALISKLKARKVIVSVAADFMALVLLTAPGKQGADIVFGSAQRFGVPMGYGGPHAAFFAAIDEFKRSMPGRIIGVSKDAAGNAALRMAMQTREQHIRREKANSNICTSQVLLANIASLYAVYHGPVGLKRIAQRIHRLTDILAAGLQQKGLKLRHAHYFDTLCVEVADKAAVLARAEAAEINLRSDIHNAVGITLDETTTRDNVLQLFTILLGDDHGLNIETLDKDVALDSRSIQQSMLRDDAVLTHPVFNRYHSETEMMRYMHSLERKDLALNQAMIPLGSCTMKLNAAAEMIPITWPEFAELHPFCPPEQAEGYQQMISQLSDWLVKLTGYDAVCMQPNSGAQGEYAGLLAIRHYHESRNEGHRDICLIPASAHGTNPASAHMAGMQVVVVACDKNGNIDLADLRAKAELHANNLSCIMVTYPSTHGVYEETIRDVCDIVHQFGGQVYLDGANMNAQVGITSPGFIGADVSHLNLHKTFCIPHGGGGPGMGPIGVKAHLAPFVPGHSVVQIEGMLTRQGAVSAAPFGSASILPISWMYIRMMGAEGLKQASQVAILNANYIASRLKDAYPILYTGRDGRVAHECILDIRPLKEETGISELDIAKRLIDYGFHAPTMSFPVAGTLMVEPTESEGKAELDRFINAMLAIRAEIERVKAGEWPLEDNPLVNAPHTQNELAAEWNHSYSREVAVFPAGVANKYWPTVKRLDDVYGDRNLFCSCVPMSEYQ.

The residue at position 708 (Lys708) is an N6-(pyridoxal phosphate)lysine.

This sequence belongs to the GcvP family. As to quaternary structure, the glycine cleavage system is composed of four proteins: P, T, L and H. The cofactor is pyridoxal 5'-phosphate.

The catalysed reaction is N(6)-[(R)-lipoyl]-L-lysyl-[glycine-cleavage complex H protein] + glycine + H(+) = N(6)-[(R)-S(8)-aminomethyldihydrolipoyl]-L-lysyl-[glycine-cleavage complex H protein] + CO2. The glycine cleavage system catalyzes the degradation of glycine. The P protein binds the alpha-amino group of glycine through its pyridoxal phosphate cofactor; CO(2) is released and the remaining methylamine moiety is then transferred to the lipoamide cofactor of the H protein. The chain is Glycine dehydrogenase (decarboxylating) from Salmonella arizonae (strain ATCC BAA-731 / CDC346-86 / RSK2980).